A 699-amino-acid polypeptide reads, in one-letter code: Ciliated left-right organizer metallopeptidase (699 aa).

The signal sequence occupies residues 1–18 (MKMWRLLLLGVATGRCLH). The Extracellular segment spans residues 19–663 (EETQKSVRLL…SLDHNPSMTE (645 aa)). A Zn(2+)-binding site is contributed by His238. Glu239 is a catalytic residue. Zn(2+)-binding residues include His242 and His318. The helical transmembrane segment at 664–684 (LLLSTGFCLLVLILVGALGTL) threads the bilayer. Residues 685-699 (AYQKRAMLQVAPSTT) are Cytoplasmic-facing.

This sequence belongs to the peptidase M8 family. Zn(2+) serves as cofactor. In terms of tissue distribution, specifically expressed in ciliated left-right organizer.

It localises to the membrane. In terms of biological role, putative metalloproteinase that plays a role in left-right patterning process. The chain is Ciliated left-right organizer metallopeptidase from Mus musculus (Mouse).